Consider the following 352-residue polypeptide: Vacuolar protein sorting-associated protein 37C (352 aa).

Residue Ser-29 is modified to Phosphoserine. The region spanning 78 to 167 is the VPS37 C-terminal domain; it reads VERCQEQKAK…RRPRALPELA (90 aa). The segment at 162–352 is disordered; sequence ALPELAGDVP…HPPGPAWPRY (191 aa). Pro residues-rich tracts occupy residues 173–185, 202–213, and 319–336; these read KRPP…PQAT, YPLPYSPSPGLP, and PGQP…PPGT.

The protein belongs to the VPS37 family. As to quaternary structure, component of the ESCRT-I complex (endosomal sorting complex required for transport I) which consists of TSG101, VPS28, a VPS37 protein (VPS37A to -D) and MVB12A or MVB12B in a 1:1:1:1 stoichiometry. Interacts with TSG101, VPS28, MVB12A and MVB12B. Component of the ESCRT-I complex (endosomal sorting complex required for transport I) which consists of TSG101, VPS28, a VPS37 protein (VPS37A to -D) and UBAP1 in a 1:1:1:1 stoichiometry. Interacts with HGS and STAM2. Interacts with CEP55. Post-translationally, phosphorylated by TBK1.

Its subcellular location is the late endosome membrane. In terms of biological role, component of the ESCRT-I complex, a regulator of vesicular trafficking process. Required for the sorting of endocytic ubiquitinated cargos into multivesicular bodies. May be involved in cell growth and differentiation. The chain is Vacuolar protein sorting-associated protein 37C (Vps37c) from Mus musculus (Mouse).